The chain runs to 220 residues: uncharacterized protein (220 aa).

It belongs to the DadA oxidoreductase family. FAD serves as cofactor.

This is an uncharacterized protein from Halorhodospira halophila (Ectothiorhodospira halophila).